The sequence spans 488 residues: 3-octaprenyl-4-hydroxybenzoate carboxy-lyase (488 aa).

N172 contributes to the Mn(2+) binding site. Prenylated FMN contacts are provided by residues 175 to 177 (IYR), 189 to 191 (RWL), and 194 to 195 (RG). E238 lines the Mn(2+) pocket. The active-site Proton donor is the D287.

It belongs to the UbiD family. Homohexamer. It depends on prenylated FMN as a cofactor. The cofactor is Mn(2+).

The protein resides in the cell membrane. The enzyme catalyses a 4-hydroxy-3-(all-trans-polyprenyl)benzoate + H(+) = a 2-(all-trans-polyprenyl)phenol + CO2. It functions in the pathway cofactor biosynthesis; ubiquinone biosynthesis. Catalyzes the decarboxylation of 3-octaprenyl-4-hydroxy benzoate to 2-octaprenylphenol, an intermediate step in ubiquinone biosynthesis. This is 3-octaprenyl-4-hydroxybenzoate carboxy-lyase from Legionella pneumophila (strain Paris).